Consider the following 490-residue polypeptide: GTPase Der (490 aa).

2 EngA-type G domains span residues 1–165 and 227–400; these read MRIA…QIPV and LKVA…TIAT. Residues 7–14, 54–58, 117–120, 233–240, 280–284, and 345–348 each bind GTP; these read GRPNVGKS, DTGGV, NKAD, GHPNVGKS, DTAGL, and NKWD. Residues 401–485 enclose the KH-like domain; that stretch reads TKLSTSLVNK…PFDLEYKAKP (85 aa).

The protein belongs to the TRAFAC class TrmE-Era-EngA-EngB-Septin-like GTPase superfamily. EngA (Der) GTPase family. Associates with the 50S ribosomal subunit.

In terms of biological role, GTPase that plays an essential role in the late steps of ribosome biogenesis. The sequence is that of GTPase Der from Chlamydia trachomatis serovar A (strain ATCC VR-571B / DSM 19440 / HAR-13).